The primary structure comprises 606 residues: Serine/threonine-protein kinase A-Raf (606 aa).

Positions 19–91 (GTVKVYLPNK…DGEELIVEVL (73 aa)) constitute an RBD domain. A Phorbol-ester/DAG-type zinc finger spans residues 98–144 (MHNFVRKTFFSLAFCDFCLKFLFHGFRCQTCGYKFHQHCSSKVPTVC). 8 residues coordinate Zn(2+): histidine 99, cysteine 112, cysteine 115, cysteine 125, cysteine 128, histidine 133, cysteine 136, and cysteine 144. Phosphoserine occurs at positions 157 and 162. Residues 160–207 (DLSGGSRQHEAPSNRPLNELLTPQGPSPRTQHCDPEHFPFPAPANAPL) form a disordered region. A Phosphothreonine modification is found at threonine 181. Residues serine 186 and serine 214 each carry the phosphoserine modification. Residues 240 to 290 (STDAAGSRGGSDGTPRGSPSPASVSSGRKSPHSKSPAEQRERKSLADDKKK) are disordered. Threonine 253 bears the Phosphothreonine mark. 2 positions are modified to phosphoserine: serine 257 and serine 269. Residues 274 to 289 (SPAEQRERKSLADDKK) are compositionally biased toward basic and acidic residues. The 261-residue stretch at 310 to 570 (VQLLKRIGTG…PQILATIELL (261 aa)) folds into the Protein kinase domain. ATP is bound by residues 316 to 324 (IGTGSFGTV) and lysine 336. A Phosphothreonine modification is found at threonine 318. Catalysis depends on aspartate 429, which acts as the Proton acceptor.

This sequence belongs to the protein kinase superfamily. TKL Ser/Thr protein kinase family. RAF subfamily. Interacts with TH1L/NELFD. Zn(2+) serves as cofactor. In terms of processing, dephosphorylation of Ser-214 by the SHOC2-MRAS-PP1c (SMP) complex consisting of SHOC2, GTP-bound M-Ras/MRAS and the catalytic subunit of protein phosphatase 1 (PPP1CA, PPP1CB or PPP1CC); this relieves inactivation and stimulates kinase activity. In terms of tissue distribution, predominantly in urogenital tissues.

The catalysed reaction is L-seryl-[protein] + ATP = O-phospho-L-seryl-[protein] + ADP + H(+). The enzyme catalyses L-threonyl-[protein] + ATP = O-phospho-L-threonyl-[protein] + ADP + H(+). Its function is as follows. Involved in the transduction of mitogenic signals from the cell membrane to the nucleus. May also regulate the TOR signaling cascade. Phosphorylates PFKFB2. Functionally, serves as a positive regulator of myogenic differentiation by inducing cell cycle arrest, the expression of myogenin and other muscle-specific proteins, and myotube formation. The polypeptide is Serine/threonine-protein kinase A-Raf (ARAF) (Homo sapiens (Human)).